Consider the following 516-residue polypeptide: Rho guanine nucleotide exchange factor 9 (516 aa).

The SH3 domain maps to 8–67 (DSIVSAEAVWDHVTMANRELAFKAGDVIKVLDASNKDWWWGQIDDEEGWFPASFVRLWVN). The tract at residues 100–110 (RDQMRANVINE) is interaction with GPHN. One can recognise a DH domain in the interval 103–287 (MRANVINEIM…RNVTQQINER (185 aa)). In terms of domain architecture, PH spans 318–425 (ELIYTGEMAW…WLRAFREERK (108 aa)). The interval 453-480 (PKQKGVNSARSVPPSYPPPQDPLNHGQY) is disordered. A Phosphoserine modification is found at S502.

As to quaternary structure, interacts with GPHN. As to expression, detected in brain. Detected at low levels in heart.

It is found in the cytoplasm. The protein resides in the postsynaptic density. Its function is as follows. Acts as a guanine nucleotide exchange factor (GEF) for CDC42. Promotes formation of GPHN clusters. This Homo sapiens (Human) protein is Rho guanine nucleotide exchange factor 9 (ARHGEF9).